The following is a 329-amino-acid chain: Sialic acid-binding periplasmic protein SiaP (329 aa).

The signal sequence occupies residues 1–23; the sequence is MMKLTKLFLATAISLGVSSAVLA. Residues asparagine 33, aspartate 72, glutamate 90, arginine 150, arginine 170, and asparagine 210 each coordinate N-acetyl-beta-neuraminate.

The protein belongs to the bacterial solute-binding protein 7 family. The complex comprises the extracytoplasmic solute receptor protein SiaP, and the fused transmembrane protein SiaT.

The protein localises to the periplasm. Functionally, part of the tripartite ATP-independent periplasmic (TRAP) transport system SiaPT involved in the uptake of sialic acid (N-acetyl-beta-neuraminate). This protein specifically binds sialic acid with high affinity. N-Acetylneuraminate (sialic acid) can then be incorporated into the lipooligosaccharides (LOS) as a terminal non-reducing sugar, protecting the bacterium from complement-mediated killing by normal human serum. This chain is Sialic acid-binding periplasmic protein SiaP (siaP), found in Haemophilus influenzae (strain ATCC 51907 / DSM 11121 / KW20 / Rd).